The sequence spans 258 residues: tRNA pseudouridine synthase A (258 aa).

The Nucleophile role is filled by Asp52. Tyr111 is a binding site for substrate.

It belongs to the tRNA pseudouridine synthase TruA family. Homodimer.

The enzyme catalyses uridine(38/39/40) in tRNA = pseudouridine(38/39/40) in tRNA. Functionally, formation of pseudouridine at positions 38, 39 and 40 in the anticodon stem and loop of transfer RNAs. The protein is tRNA pseudouridine synthase A of Azorhizobium caulinodans (strain ATCC 43989 / DSM 5975 / JCM 20966 / LMG 6465 / NBRC 14845 / NCIMB 13405 / ORS 571).